A 91-amino-acid polypeptide reads, in one-letter code: Sec-independent protein translocase protein TatA (91 aa).

The helical transmembrane segment at 1–21 threads the bilayer; the sequence is MGIFDWKHWIVILIVVVLVFG. The tract at residues 42-91 is disordered; the sequence is AMHDDDKPAEQPAPQPQQAQPAPQGSPLNQPHTIDAQAHKVDEPIRKDQV. The span at 51–64 shows a compositional bias: low complexity; it reads EQPAPQPQQAQPAP. Residues 78–91 show a composition bias toward basic and acidic residues; sequence QAHKVDEPIRKDQV.

This sequence belongs to the TatA/E family. In terms of assembly, the Tat system comprises two distinct complexes: a TatABC complex, containing multiple copies of TatA, TatB and TatC subunits, and a separate TatA complex, containing only TatA subunits. Substrates initially bind to the TatABC complex, which probably triggers association of the separate TatA complex to form the active translocon.

Its subcellular location is the cell inner membrane. In terms of biological role, part of the twin-arginine translocation (Tat) system that transports large folded proteins containing a characteristic twin-arginine motif in their signal peptide across membranes. TatA could form the protein-conducting channel of the Tat system. This Pseudomonas syringae pv. tomato (strain ATCC BAA-871 / DC3000) protein is Sec-independent protein translocase protein TatA.